Consider the following 660-residue polypeptide: Bifunctional polymyxin resistance protein ArnA (660 aa).

A formyltransferase ArnAFT region spans residues 1-304 (MKAIVFAYHD…DMSMVTDVRV (304 aa)). The active-site Proton donor; for formyltransferase activity is the His-104. Residues Arg-114 and 136–140 (VLKPD) each bind (6R)-10-formyltetrahydrofolate. Residues 314–660 (HRKRVLILGV…RGAVEELGKN (347 aa)) are dehydrogenase ArnADH. Residues Asp-347 and 368 to 369 (DI) each bind NAD(+). Residues Ala-393, Tyr-398, and 432–433 (TS) contribute to the UDP-alpha-D-glucuronate site. Glu-434 functions as the Proton acceptor; for decarboxylase activity in the catalytic mechanism. UDP-alpha-D-glucuronate-binding positions include Arg-460, Asn-492, 526-535 (KLVDGGEQKR), and Tyr-613. Residue Arg-619 is the Proton donor; for decarboxylase activity of the active site.

The protein in the N-terminal section; belongs to the Fmt family. UDP-L-Ara4N formyltransferase subfamily. This sequence in the C-terminal section; belongs to the NAD(P)-dependent epimerase/dehydratase family. UDP-glucuronic acid decarboxylase subfamily. In terms of assembly, homohexamer, formed by a dimer of trimers.

The enzyme catalyses UDP-alpha-D-glucuronate + NAD(+) = UDP-beta-L-threo-pentopyranos-4-ulose + CO2 + NADH. The catalysed reaction is UDP-4-amino-4-deoxy-beta-L-arabinose + (6R)-10-formyltetrahydrofolate = UDP-4-deoxy-4-formamido-beta-L-arabinose + (6S)-5,6,7,8-tetrahydrofolate + H(+). Its pathway is nucleotide-sugar biosynthesis; UDP-4-deoxy-4-formamido-beta-L-arabinose biosynthesis; UDP-4-deoxy-4-formamido-beta-L-arabinose from UDP-alpha-D-glucuronate: step 1/3. The protein operates within nucleotide-sugar biosynthesis; UDP-4-deoxy-4-formamido-beta-L-arabinose biosynthesis; UDP-4-deoxy-4-formamido-beta-L-arabinose from UDP-alpha-D-glucuronate: step 3/3. It participates in bacterial outer membrane biogenesis; lipopolysaccharide biosynthesis. Bifunctional enzyme that catalyzes the oxidative decarboxylation of UDP-glucuronic acid (UDP-GlcUA) to UDP-4-keto-arabinose (UDP-Ara4O) and the addition of a formyl group to UDP-4-amino-4-deoxy-L-arabinose (UDP-L-Ara4N) to form UDP-L-4-formamido-arabinose (UDP-L-Ara4FN). The modified arabinose is attached to lipid A and is required for resistance to polymyxin and cationic antimicrobial peptides. The sequence is that of Bifunctional polymyxin resistance protein ArnA from Photorhabdus laumondii subsp. laumondii (strain DSM 15139 / CIP 105565 / TT01) (Photorhabdus luminescens subsp. laumondii).